The primary structure comprises 54 residues: Large ribosomal subunit protein bL32c (54 aa).

Residues 1–25 (MAVPKKRTSKAKKNSRKANWKRKAA) show a composition bias toward basic residues. Positions 1–26 (MAVPKKRTSKAKKNSRKANWKRKAAK) are disordered.

Belongs to the bacterial ribosomal protein bL32 family.

The protein resides in the plastid. It is found in the chloroplast. The chain is Large ribosomal subunit protein bL32c from Thalassiosira pseudonana (Marine diatom).